Here is a 307-residue protein sequence, read N- to C-terminus: Nicotinamide/nicotinic acid mononucleotide adenylyltransferase 2 (307 aa).

NAD(+) contacts are provided by S16 and F17. H24 is an ATP binding site. NAD(+) contacts are provided by W92 and T95. 2 S-palmitoyl cysteine lipidation sites follow: C164 and C165. Residues G200, D202, L212, W213, and R232 each coordinate NAD(+). Residue 271–274 coordinates ATP; that stretch reads TKSR.

Belongs to the eukaryotic NMN adenylyltransferase family. As to quaternary structure, monomer. Mg(2+) is required as a cofactor. In terms of processing, degraded in response to injured neurite. Degradation is caused by polyubiquitination by MYCBP2 after recognition by FBXO45. Post-translationally, palmitoylated; palmitoylation is required for membrane association.

Its subcellular location is the golgi apparatus membrane. It is found in the cytoplasmic vesicle membrane. It localises to the cytoplasm. The protein localises to the cell projection. The protein resides in the axon. The catalysed reaction is beta-nicotinamide D-ribonucleotide + ATP + H(+) = diphosphate + NAD(+). The enzyme catalyses nicotinate beta-D-ribonucleotide + ATP + H(+) = deamido-NAD(+) + diphosphate. It functions in the pathway cofactor biosynthesis; NAD(+) biosynthesis; NAD(+) from nicotinamide D-ribonucleotide: step 1/1. The protein operates within cofactor biosynthesis; NAD(+) biosynthesis; deamido-NAD(+) from nicotinate D-ribonucleotide: step 1/1. With respect to regulation, inhibited by P1-(adenosine-5')-P3-(nicotinamide-riboside-5')-triphosphate (Np3AD) and P1-(adenosine-5')-P4-(nicotinamide-riboside-5')-tetraphosphate (Np4AD). In terms of biological role, nicotinamide/nicotinate-nucleotide adenylyltransferase that acts as an axon maintenance factor. Axon survival factor required for the maintenance of healthy axons: acts by delaying Wallerian axon degeneration, an evolutionarily conserved process that drives the loss of damaged axons. Catalyzes the formation of NAD(+) from nicotinamide mononucleotide (NMN) and ATP. Can also use the deamidated form; nicotinic acid mononucleotide (NaMN) as substrate but with a lower efficiency. Cannot use triazofurin monophosphate (TrMP) as substrate. Also catalyzes the reverse reaction, i.e. the pyrophosphorolytic cleavage of NAD(+). For the pyrophosphorolytic activity prefers NAD(+), NADH and NaAD as substrates and degrades nicotinic acid adenine dinucleotide phosphate (NHD) less effectively. Fails to cleave phosphorylated dinucleotides NADP(+), NADPH and NaADP(+). Also acts as an activator of ADP-ribosylation by supporting the catalytic activity of PARP16 and promoting mono-ADP-ribosylation of ribosomes by PARP16. May be involved in the maintenance of axonal integrity. In Rattus norvegicus (Rat), this protein is Nicotinamide/nicotinic acid mononucleotide adenylyltransferase 2 (Nmnat2).